Consider the following 215-residue polypeptide: Large ribosomal subunit protein uL3 (215 aa).

The tract at residues 136–161 (GVSISHRSHGSTGQRQDPGKVFKGKK) is disordered. The residue at position 151 (Gln151) is an N5-methylglutamine.

Belongs to the universal ribosomal protein uL3 family. As to quaternary structure, part of the 50S ribosomal subunit. Forms a cluster with proteins L14 and L19. In terms of processing, methylated by PrmB.

Functionally, one of the primary rRNA binding proteins, it binds directly near the 3'-end of the 23S rRNA, where it nucleates assembly of the 50S subunit. The sequence is that of Large ribosomal subunit protein uL3 from Rickettsia akari (strain Hartford).